The following is a 183-amino-acid chain: 2-hydroxy-1,4-benzoquinone reductase (183 aa).

Residues Ser-11 to Asn-18, Glu-77 to Arg-80, and Ser-113 contribute to the FMN site.

The protein belongs to the SsuE family. As to quaternary structure, homotetramer. The cofactor is FMN.

The catalysed reaction is 2-hydroxy-1,4-benzoquinone + NADH + 2 H(+) = benzene-1,2,4-triol + NAD(+). In terms of biological role, involved in the metabolism of 4-aminophenol. Catalyzes the reduction of the auto-oxidation product 2-hydroxy-1,4-benzoquinone back to hydroxyquinol. Has a broad substrate specificity toward benzoquinones, converting them to the corresponding 1,4-benzenediols. The sequence is that of 2-hydroxy-1,4-benzoquinone reductase from Burkholderia sp.